Here is a 101-residue protein sequence, read N- to C-terminus: Large ribosomal subunit protein uL23 (101 aa).

This sequence belongs to the universal ribosomal protein uL23 family. In terms of assembly, part of the 50S ribosomal subunit. Contacts protein L29, and trigger factor when it is bound to the ribosome.

Functionally, one of the early assembly proteins it binds 23S rRNA. One of the proteins that surrounds the polypeptide exit tunnel on the outside of the ribosome. Forms the main docking site for trigger factor binding to the ribosome. This Pseudarthrobacter chlorophenolicus (strain ATCC 700700 / DSM 12829 / CIP 107037 / JCM 12360 / KCTC 9906 / NCIMB 13794 / A6) (Arthrobacter chlorophenolicus) protein is Large ribosomal subunit protein uL23.